We begin with the raw amino-acid sequence, 488 residues long: Gamma-aminobutyric acid receptor subunit beta-4 (488 aa).

The signal sequence occupies residues 1-25 (MWTFQADRLSGIVSALAALCVACCA). At 26–244 (QSPSTGNISV…SFRIKRNIGY (219 aa)) the chain is on the extracellular side. N-linked (GlcNAc...) asparagine glycans are attached at residues Asn32, Asn104, Asn173, and Asn195. A disulfide bridge links Cys160 with Cys174. The next 3 membrane-spanning stretches (helical) occupy residues 245–266 (FILQ…SFWI), 271–292 (SAAR…NTHL), and 304–326 (AIDV…YAFV). The Cytoplasmic segment spans residues 327 to 465 (NYIFFGRGPR…DLTDVSTIDK (139 aa)). The chain crosses the membrane as a helical span at residues 466–487 (WSRIIFPITFGFFNLVYWLYYV).

This sequence belongs to the ligand-gated ion channel (TC 1.A.9) family. Gamma-aminobutyric acid receptor (TC 1.A.9.5) subfamily. GABRB4 sub-subfamily. As to quaternary structure, generally pentameric. There are five types of GABA(A) receptor chains: alpha, beta, gamma, delta, and rho.

It localises to the postsynaptic cell membrane. Its subcellular location is the cell membrane. Functionally, GABA, the major inhibitory neurotransmitter in the vertebrate brain, mediates neuronal inhibition by binding to the GABA/benzodiazepine receptor and opening an integral chloride channel. This Gallus gallus (Chicken) protein is Gamma-aminobutyric acid receptor subunit beta-4 (GABRB4).